The sequence spans 429 residues: Stromal membrane-associated protein 2 (429 aa).

Positions 13 to 137 (QAVLANLLLE…LDINAFRKEK (125 aa)) constitute an Arf-GAP domain. A C4-type zinc finger spans residues 28–51 (CADCQSKGPRWASWNIGVFICIRC). A Phosphoserine modification is found at S127. Over residues 138 to 172 (DNKWKRGSEPAPEKKMEPVVFEKVKMPQKKEDPQL) the composition is skewed to basic and acidic residues. Disordered stretches follow at residues 138 to 181 (DNKW…PKSK) and 217 to 263 (VSSP…KKQL). Residues 163–232 (MPQKKEDPQL…SVSRKVVGSM (70 aa)) form an interaction with clathrin heavy chains region. Residues 217–231 (VSSPSSSVSRKVVGS) are compositionally biased toward low complexity. S219, S223, S225, S231, and S240 each carry phosphoserine. Over residues 253 to 263 (SKSEETSKKQL) the composition is skewed to basic and acidic residues. Residues 340–429 (MGGMQASMMG…NQTLSPQMWK (90 aa)) form an interaction with PICALM region.

In terms of assembly, interacts with ARF1. Interacts with PICALM and clathrin heavy chains.

Its subcellular location is the cytoplasm. GTPase activating protein that acts on ARF1. Can also activate ARF6 (in vitro). May play a role in clathrin-dependent retrograde transport from early endosomes to the trans-Golgi network. This is Stromal membrane-associated protein 2 (SMAP2) from Bos taurus (Bovine).